The primary structure comprises 341 residues: Anthranilate phosphoribosyltransferase (341 aa).

5-phospho-alpha-D-ribose 1-diphosphate contacts are provided by residues glycine 81, 84–85 (GD), threonine 89, 91–94 (NIST), 109–117 (KHGNRKASS), and threonine 121. Glycine 81 is an anthranilate binding site. Serine 93 contacts Mg(2+). Asparagine 112 is an anthranilate binding site. Arginine 167 lines the anthranilate pocket. Mg(2+) is bound by residues aspartate 226 and glutamate 227.

It belongs to the anthranilate phosphoribosyltransferase family. As to quaternary structure, homodimer. Mg(2+) serves as cofactor.

It catalyses the reaction N-(5-phospho-beta-D-ribosyl)anthranilate + diphosphate = 5-phospho-alpha-D-ribose 1-diphosphate + anthranilate. The protein operates within amino-acid biosynthesis; L-tryptophan biosynthesis; L-tryptophan from chorismate: step 2/5. Its function is as follows. Catalyzes the transfer of the phosphoribosyl group of 5-phosphorylribose-1-pyrophosphate (PRPP) to anthranilate to yield N-(5'-phosphoribosyl)-anthranilate (PRA). This Parvibaculum lavamentivorans (strain DS-1 / DSM 13023 / NCIMB 13966) protein is Anthranilate phosphoribosyltransferase.